The sequence spans 545 residues: T-complex protein 1 subunit alpha (545 aa).

It belongs to the TCP-1 chaperonin family. In terms of assembly, heterooligomeric complex of about 850 to 900 kDa that forms two stacked rings, 12 to 16 nm in diameter.

The protein localises to the cytoplasm. In terms of biological role, molecular chaperone; assists the folding of proteins upon ATP hydrolysis. Known to play a role, in vitro, in the folding of actin and tubulin. The sequence is that of T-complex protein 1 subunit alpha (TCP-1A) from Schistosoma mansoni (Blood fluke).